Reading from the N-terminus, the 290-residue chain is MLPDSSVRLNKYISESGICSRREADRYIEQGNVFLNGKRATIGDQVKPGDIVKVNGQLIEPREAEDLVLIALNKPVGIVSTTEDGERDNIVDFVNHSKRVFPIGRLDKDSQGLIFLTNHGDLVNKILRAGNDHEKEYLVTVDKPITDEFIRGMGAGVPILGTVTKKCKVKKEAPFVFRITLVQGLNRQIRRMCEHFGYEVKKLERTRIMNVSLSGIPLGEWRDLTDDELIDLFKLIENSSSEAKPKAKAKPKTAGIKRPVVKMEKTAEKGGRPASNGKRFTSPGRKKKGR.

Residues 7-72 (VRLNKYISES…EAEDLVLIAL (66 aa)) enclose the S4 RNA-binding domain. Interaction with RNA stretches follow at residues 105-108 (RLDK) and 187-190 (RQIR). Aspartate 107 functions as the Nucleophile in the catalytic mechanism. Residues 241–290 (SEAKPKAKAKPKTAGIKRPVVKMEKTAEKGGRPASNGKRFTSPGRKKKGR) are disordered. The span at 261 to 271 (VKMEKTAEKGG) shows a compositional bias: basic and acidic residues.

The protein belongs to the pseudouridine synthase RsuA family. As to quaternary structure, monomer.

It catalyses the reaction uridine(2604) in 23S rRNA = pseudouridine(2604) in 23S rRNA. The catalysed reaction is uridine(35) in tRNA(Tyr) = pseudouridine(35) in tRNA(Tyr). Its function is as follows. Dual specificity enzyme that catalyzes the synthesis of pseudouridine from uracil-2604 in 23S ribosomal RNA and from uracil-35 in the anticodon of tRNA(Tyr). The polypeptide is Dual-specificity RNA pseudouridine synthase RluF (rluF) (Shigella flexneri).